The chain runs to 232 residues: Ribonuclease 3 (232 aa).

The region spanning 6–133 is the RNase III domain; sequence FNDIENRLGV…VIAAVYLDKG (128 aa). Glutamate 46 provides a ligand contact to Mg(2+). The active site involves aspartate 50. Residues aspartate 119 and glutamate 122 each coordinate Mg(2+). The active site involves glutamate 122. A DRBM domain is found at 160–229; sequence DFKTKLQELL…AKEALKRLEK (70 aa).

This sequence belongs to the ribonuclease III family. In terms of assembly, homodimer. Mg(2+) serves as cofactor.

It is found in the cytoplasm. The enzyme catalyses Endonucleolytic cleavage to 5'-phosphomonoester.. Digests double-stranded RNA. Involved in the processing of primary rRNA transcript to yield the immediate precursors to the large and small rRNAs (23S and 16S). Processes some mRNAs, and tRNAs when they are encoded in the rRNA operon. Processes pre-crRNA and tracrRNA of type II CRISPR loci if present in the organism. The chain is Ribonuclease 3 from Clostridium botulinum (strain Eklund 17B / Type B).